A 120-amino-acid chain; its full sequence is NAD(P)H-quinone oxidoreductase subunit 3, chloroplastic (120 aa).

Helical transmembrane passes span 10-30, 64-84, and 88-108; these read FWVF…ISGV, IFAL…PWAM, and VLGV…IVGS.

This sequence belongs to the complex I subunit 3 family. In terms of assembly, NDH is composed of at least 16 different subunits, 5 of which are encoded in the nucleus.

It is found in the plastid. Its subcellular location is the chloroplast thylakoid membrane. It carries out the reaction a plastoquinone + NADH + (n+1) H(+)(in) = a plastoquinol + NAD(+) + n H(+)(out). The enzyme catalyses a plastoquinone + NADPH + (n+1) H(+)(in) = a plastoquinol + NADP(+) + n H(+)(out). In terms of biological role, NDH shuttles electrons from NAD(P)H:plastoquinone, via FMN and iron-sulfur (Fe-S) centers, to quinones in the photosynthetic chain and possibly in a chloroplast respiratory chain. The immediate electron acceptor for the enzyme in this species is believed to be plastoquinone. Couples the redox reaction to proton translocation, and thus conserves the redox energy in a proton gradient. The polypeptide is NAD(P)H-quinone oxidoreductase subunit 3, chloroplastic (Pelargonium hortorum (Common geranium)).